The following is a 325-amino-acid chain: Transaldolase (325 aa).

The active-site Schiff-base intermediate with substrate is Lys125.

Belongs to the transaldolase family. Type 2 subfamily.

It is found in the cytoplasm. The enzyme catalyses D-sedoheptulose 7-phosphate + D-glyceraldehyde 3-phosphate = D-erythrose 4-phosphate + beta-D-fructose 6-phosphate. The protein operates within carbohydrate degradation; pentose phosphate pathway; D-glyceraldehyde 3-phosphate and beta-D-fructose 6-phosphate from D-ribose 5-phosphate and D-xylulose 5-phosphate (non-oxidative stage): step 2/3. Functionally, transaldolase is important for the balance of metabolites in the pentose-phosphate pathway. This is Transaldolase from Campylobacter jejuni subsp. jejuni serotype O:23/36 (strain 81-176).